The chain runs to 194 residues: Adenylate kinase isoenzyme 1 (194 aa).

Met-1 bears the N-acetylmethionine mark. ATP is bound at residue 18-23 (GSGKGT). Residue Ser-38 is modified to Phosphoserine. An NMP region spans residues 38 to 67 (STGDLLRAEVSSGSARGKMLSEIMEKGQLV). Residues Thr-39, Arg-44, 65-67 (QLV), 94-97 (GYPR), and Gln-101 each bind AMP. An LID region spans residues 131 to 141 (KRGETSGRVDD). Arg-132 contributes to the ATP binding site. Arg-138 and Arg-149 together coordinate AMP. ATP is bound at residue Gly-177.

Belongs to the adenylate kinase family. AK1 subfamily. As to quaternary structure, monomer. Mg(2+) serves as cofactor.

The protein resides in the cytoplasm. The catalysed reaction is a ribonucleoside 5'-phosphate + ATP = a ribonucleoside 5'-diphosphate + ADP. The enzyme catalyses AMP + ATP = 2 ADP. It catalyses the reaction dAMP + ATP = dADP + ADP. It carries out the reaction dATP + AMP = dADP + ADP. The catalysed reaction is dAMP + dATP = 2 dADP. The enzyme catalyses a 2'-deoxyribonucleoside 5'-diphosphate + ATP = a 2'-deoxyribonucleoside 5'-triphosphate + ADP. It catalyses the reaction a ribonucleoside 5'-diphosphate + ATP = a ribonucleoside 5'-triphosphate + ADP. It carries out the reaction CDP + GTP = CTP + GDP. The catalysed reaction is GDP + ATP = GTP + ADP. The enzyme catalyses UDP + ATP = UTP + ADP. It catalyses the reaction GTP + UDP = UTP + GDP. It carries out the reaction dTDP + GTP = dTTP + GDP. The catalysed reaction is dCDP + GTP = dCTP + GDP. The enzyme catalyses dGDP + ATP = dGTP + ADP. It catalyses the reaction dADP + GTP = dATP + GDP. It carries out the reaction thiamine diphosphate + ADP = thiamine triphosphate + AMP. Its function is as follows. Catalyzes the reversible transfer of the terminal phosphate group between ATP and AMP. Also displays broad nucleoside diphosphate kinase activity. Plays an important role in cellular energy homeostasis and in adenine nucleotide metabolism. Also catalyzes at a very low rate the synthesis of thiamine triphosphate (ThTP) from thiamine diphosphate (ThDP) and ADP. The sequence is that of Adenylate kinase isoenzyme 1 from Sus scrofa (Pig).